The sequence spans 309 residues: L-aminoadipate-semialdehyde dehydrogenase-phosphopantetheinyl transferase (309 aa).

CoA is bound by residues R47, 86–91 (RTAKGK), and 108–111 (NISH). Positions 129 and 181 each coordinate Mg(2+). Residue 181 to 185 (ESFIK) coordinates CoA. The residue at position 258 (S258) is a Phosphoserine.

This sequence belongs to the P-Pant transferase superfamily. AcpS family. As to quaternary structure, monomer. Mg(2+) serves as cofactor. As to expression, detected in heart, skeletal muscle, placenta, testis, brain, pancreas, liver and kidney.

It localises to the cytoplasm. It is found in the cytosol. The catalysed reaction is apo-[ACP] + CoA = holo-[ACP] + adenosine 3',5'-bisphosphate + H(+). The enzyme catalyses apo-[ACP] + acetyl-CoA = acetyl-[ACP] + adenosine 3',5'-bisphosphate + H(+). Functionally, catalyzes the post-translational modification of target proteins by phosphopantetheine. Can transfer the 4'-phosphopantetheine moiety from coenzyme A, regardless of whether the CoA is presented in the free thiol form or as an acetyl thioester, to a serine residue of a broad range of acceptors including the acyl carrier domain of FASN. This is L-aminoadipate-semialdehyde dehydrogenase-phosphopantetheinyl transferase (AASDHPPT) from Homo sapiens (Human).